The chain runs to 215 residues: Cytochrome b6 (215 aa).

Residues 32–52 (IFYCLGGITLTCFLVQVATGF) form a helical membrane-spanning segment. Cysteine 35 provides a ligand contact to heme c. Histidine 86 and histidine 100 together coordinate heme b. A run of 3 helical transmembrane segments spans residues 90 to 110 (ASMM…TGGF), 116 to 136 (LTWV…VTGY), and 186 to 206 (LHTF…FPMI). Heme b-binding residues include histidine 187 and histidine 202.

This sequence belongs to the cytochrome b family. PetB subfamily. In terms of assembly, the 4 large subunits of the cytochrome b6-f complex are cytochrome b6, subunit IV (17 kDa polypeptide, PetD), cytochrome f and the Rieske protein, while the 4 small subunits are PetG, PetL, PetM and PetN. The complex functions as a dimer. It depends on heme b as a cofactor. Heme c is required as a cofactor.

The protein resides in the plastid. It is found in the chloroplast thylakoid membrane. Component of the cytochrome b6-f complex, which mediates electron transfer between photosystem II (PSII) and photosystem I (PSI), cyclic electron flow around PSI, and state transitions. The chain is Cytochrome b6 from Populus alba (White poplar).